The chain runs to 530 residues: Metal transporter Nramp5 (530 aa).

The span at Met1–Glu10 shows a compositional bias: polar residues. Positions Met1–Glu53 are disordered. Basic and acidic residues predominate over residues Asn11 to Leu27. Transmembrane regions (helical) follow at residues Phe65–Leu85, Ala98–Met118, Ile147–Gly167, Phe179–Leu199, Leu207–Asn227, Ala253–Val273, Ala299–Phe319, Tyr341–Gln361, Leu387–Phe407, Ile429–Phe449, Leu458–Phe478, and Phe485–Leu505.

The protein belongs to the NRAMP (TC 2.A.55) family.

The protein localises to the membrane. Functionally, seems to be involved in iron uptake. The protein is Metal transporter Nramp5 (NRAMP5) of Arabidopsis thaliana (Mouse-ear cress).